A 727-amino-acid polypeptide reads, in one-letter code: Catalase-peroxidase (727 aa).

The disordered stretch occupies residues 1 to 21; it reads MDAKVEDNIAGKCPMGHGRGP. The tryptophyl-tyrosyl-methioninium (Trp-Tyr) (with M-243) cross-link spans 95–217; sequence WHAAGTYRIT…LGAVQMGLIY (123 aa). Residue histidine 96 is the Proton acceptor of the active site. A cross-link (tryptophyl-tyrosyl-methioninium (Tyr-Met) (with W-95)) is located at residues 217–243; it reads YVNPEGPNGNPDPLASARDIRETFARM. Histidine 258 is a binding site for heme b.

The protein belongs to the peroxidase family. Peroxidase/catalase subfamily. Homodimer or homotetramer. Heme b is required as a cofactor. Formation of the three residue Trp-Tyr-Met cross-link is important for the catalase, but not the peroxidase activity of the enzyme.

The enzyme catalyses H2O2 + AH2 = A + 2 H2O. It carries out the reaction 2 H2O2 = O2 + 2 H2O. Bifunctional enzyme with both catalase and broad-spectrum peroxidase activity. Important for stationary phase survival. This chain is Catalase-peroxidase, found in Caulobacter vibrioides (strain ATCC 19089 / CIP 103742 / CB 15) (Caulobacter crescentus).